The primary structure comprises 883 residues: Phosphoenolpyruvate carboxylase (883 aa).

Catalysis depends on residues histidine 138 and lysine 546.

The protein belongs to the PEPCase type 1 family. Requires Mg(2+) as cofactor.

It carries out the reaction oxaloacetate + phosphate = phosphoenolpyruvate + hydrogencarbonate. Its function is as follows. Forms oxaloacetate, a four-carbon dicarboxylic acid source for the tricarboxylic acid cycle. The polypeptide is Phosphoenolpyruvate carboxylase (Escherichia coli O127:H6 (strain E2348/69 / EPEC)).